The following is a 338-amino-acid chain: Acyl-CoA:acyl-CoA alkyltransferase (338 aa).

Mn(2+)-binding residues include His-18 and Asp-56. Glu-97 serves as the catalytic Proton acceptor. Cys-123 serves as the catalytic Acyl-thioester intermediate.

This sequence belongs to the thiolase-like superfamily. OleA family. As to quaternary structure, homodimer. Weakly associates with the OleBCD complex.

It localises to the cytoplasm. It catalyses the reaction a 1,2-saturated acyl-CoA + an acyl-CoA + H2O = an (R)-2-alkyl-3-oxoalkanoate + 2 CoA + H(+). Inhibited by cerulenin. Its function is as follows. Involved in olefin biosynthesis. Catalyzes a non-decarboxylative head-to-head Claisen condensation of two acyl-CoA molecules, generating an (R)-2-alkyl-3-oxoalkanoate. Is active with fatty acyl-CoA substrates that ranged from C(8) to C(16) in length, and is the most active with palmitoyl-CoA and myristoyl-CoA. The chain is Acyl-CoA:acyl-CoA alkyltransferase from Xanthomonas campestris pv. campestris (strain ATCC 33913 / DSM 3586 / NCPPB 528 / LMG 568 / P 25).